Here is a 279-residue protein sequence, read N- to C-terminus: Pantothenate synthetase (279 aa).

31 to 38 provides a ligand contact to ATP; the sequence is MGALHEGH. The active-site Proton donor is the His38. Gln62 is a (R)-pantoate binding site. Gln62 contributes to the beta-alanine binding site. Residue 148-151 coordinates ATP; the sequence is GEKD. Gln154 serves as a coordination point for (R)-pantoate. ATP contacts are provided by residues Val177 and 185-188; that span reads LSSR.

Belongs to the pantothenate synthetase family. Homodimer.

It localises to the cytoplasm. It carries out the reaction (R)-pantoate + beta-alanine + ATP = (R)-pantothenate + AMP + diphosphate + H(+). Its pathway is cofactor biosynthesis; (R)-pantothenate biosynthesis; (R)-pantothenate from (R)-pantoate and beta-alanine: step 1/1. Its function is as follows. Catalyzes the condensation of pantoate with beta-alanine in an ATP-dependent reaction via a pantoyl-adenylate intermediate. This chain is Pantothenate synthetase, found in Cereibacter sphaeroides (strain ATCC 17023 / DSM 158 / JCM 6121 / CCUG 31486 / LMG 2827 / NBRC 12203 / NCIMB 8253 / ATH 2.4.1.) (Rhodobacter sphaeroides).